The following is a 358-amino-acid chain: Trace amine-associated receptor 7e (358 aa).

The Extracellular segment spans residues 1-47 (MATDDASFPWDQDSILSRDLLSALSSQLCYENLNRSCIRSPYSPGPR). N-linked (GlcNAc...) asparagine glycosylation is present at Asn-34. Intrachain disulfides connect Cys-37–Cys-201 and Cys-120–Cys-205. Residues 48 to 68 (LILHAVFGFSAVLAVCGNLLV) form a helical membrane-spanning segment. Topologically, residues 69–83 (MTSILHFRQLHSPAN) are cytoplasmic. The helical transmembrane segment at 84 to 104 (FLVASLACADLLVGLTVMPFS) threads the bilayer. The Extracellular segment spans residues 105 to 121 (MVRSVEGCWYFGDIYCK). Residues 122 to 143 (FHSSFDVSFCYSSIFHLCFISV) form a helical membrane-spanning segment. Topologically, residues 144–166 (DRYIAVSDPLIYLTRFTASVSGK) are cytoplasmic. Residues 167 to 187 (CITFSWFLSIIYSFSLLYTGA) form a helical membrane-spanning segment. The Extracellular portion of the chain corresponds to 188-212 (SEAGLEDLVSALTCVGGCQLAVNQS). Residue Asn-210 is glycosylated (N-linked (GlcNAc...) asparagine). A helical transmembrane segment spans residues 213–233 (WVFINFLLFLVPTLVMMTVYS). The Cytoplasmic portion of the chain corresponds to 234–274 (KVFLIAKQQAQNIEKIGKQTARASESYKDRVAKRERKAAKT). The chain crosses the membrane as a helical span at residues 275-295 (LGITVAAFLLSWLPYFIDSII). At 296-309 (DAFLGFITPTYVYE) the chain is on the extracellular side. Residues 310 to 333 (ILVWIAYYNSAMNPLIYAFFYPWF) form a helical membrane-spanning segment. Topologically, residues 334-358 (RKAIKLIVTGKILRENSSATNLFPE) are cytoplasmic.

It belongs to the G-protein coupled receptor 1 family.

It localises to the cell membrane. Its function is as follows. Olfactory receptor specific for N,N-dimethylalkylamines trace amines. Trace amine compounds are enriched in animal body fluids and act on trace amine-associated receptors (TAARs) to elicit both intraspecific and interspecific innate behaviors. Ligand-binding causes a conformation change that triggers signaling via G(s)-class of G alpha proteins (GNAL or GNAS). The chain is Trace amine-associated receptor 7e from Rattus norvegicus (Rat).